Here is a 106-residue protein sequence, read N- to C-terminus: Large ribosomal subunit protein uL24 (106 aa).

The protein belongs to the universal ribosomal protein uL24 family. Part of the 50S ribosomal subunit.

In terms of biological role, one of two assembly initiator proteins, it binds directly to the 5'-end of the 23S rRNA, where it nucleates assembly of the 50S subunit. One of the proteins that surrounds the polypeptide exit tunnel on the outside of the subunit. The protein is Large ribosomal subunit protein uL24 of Albidiferax ferrireducens (strain ATCC BAA-621 / DSM 15236 / T118) (Rhodoferax ferrireducens).